We begin with the raw amino-acid sequence, 215 residues long: Adenylate kinase (215 aa).

ATP is bound at residue 10 to 15; sequence GAGKGT. The segment at 30 to 59 is NMP; that stretch reads STGDMLRAAIKAQTPMGKMAKEFMDAGKLV. AMP contacts are provided by residues Thr31, Arg36, 57-59, 85-88, and Gln92; these read KLV and GFPR. The interval 122-159 is LID; that stretch reads GRRVHPASGRTYHITYNPPKVDDKDNETGDDLIQREDD. ATP-binding positions include Arg123 and 132–133; that span reads TY. The AMP site is built by Arg156 and Arg167. Residue Gln201 participates in ATP binding.

The protein belongs to the adenylate kinase family. In terms of assembly, monomer.

It is found in the cytoplasm. The enzyme catalyses AMP + ATP = 2 ADP. It participates in purine metabolism; AMP biosynthesis via salvage pathway; AMP from ADP: step 1/1. Catalyzes the reversible transfer of the terminal phosphate group between ATP and AMP. Plays an important role in cellular energy homeostasis and in adenine nucleotide metabolism. This is Adenylate kinase from Hydrogenovibrio crunogenus (strain DSM 25203 / XCL-2) (Thiomicrospira crunogena).